A 429-amino-acid chain; its full sequence is MAVIEAIGAREILDSRGNPTVEVEVLLDDGTVGRAAVPSGASTGAFEAVEKRDGDDRYGGKGVRQAVQAVTDQIAPEIIGFDATEQRVLDARLIELDGTPNKSRLGANAILGVSMAVARAAADSADLPLFRYLGGPNAHLLPVPMMNILNGGAHADSNVDIQEFLIAPIGAATFAEALRYGVETYHALKAVLKGRGLATGLGDEGGFAPNLAHNREALDLILEAIGKAGFRPGRDIAVAIDAAATEFYRDGRYILEGQPRTAAELIRYYEELVASYPLVSLEDPLAEEDWDGWRELTAALGGTVQLVGDDIFVTNPERISRGIQTSVANAVLIKLNQIGTVTETLDAVELAHRAGYRTMISHRSGETEDTTIADVAVATNAGQIKTGAPARSERVAKYNQLLRIEEELDDAARYAGVAAFPRFAGGSAG.

Gln-162 provides a ligand contact to (2R)-2-phosphoglycerate. Catalysis depends on Glu-204, which acts as the Proton donor. Mg(2+) is bound by residues Asp-241, Glu-282, and Asp-309. Lys-334, Arg-363, Ser-364, and Lys-385 together coordinate (2R)-2-phosphoglycerate. Catalysis depends on Lys-334, which acts as the Proton acceptor.

The protein belongs to the enolase family. The cofactor is Mg(2+).

It localises to the cytoplasm. The protein resides in the secreted. The protein localises to the cell surface. The catalysed reaction is (2R)-2-phosphoglycerate = phosphoenolpyruvate + H2O. The protein operates within carbohydrate degradation; glycolysis; pyruvate from D-glyceraldehyde 3-phosphate: step 4/5. In terms of biological role, catalyzes the reversible conversion of 2-phosphoglycerate (2-PG) into phosphoenolpyruvate (PEP). It is essential for the degradation of carbohydrates via glycolysis. The sequence is that of Enolase from Acidothermus cellulolyticus (strain ATCC 43068 / DSM 8971 / 11B).